We begin with the raw amino-acid sequence, 313 residues long: Ribosomal RNA small subunit methyltransferase H (313 aa).

S-adenosyl-L-methionine-binding positions include 35-37, D55, F79, D100, and Q107; that span reads GGH.

Belongs to the methyltransferase superfamily. RsmH family.

It is found in the cytoplasm. The enzyme catalyses cytidine(1402) in 16S rRNA + S-adenosyl-L-methionine = N(4)-methylcytidine(1402) in 16S rRNA + S-adenosyl-L-homocysteine + H(+). Functionally, specifically methylates the N4 position of cytidine in position 1402 (C1402) of 16S rRNA. The polypeptide is Ribosomal RNA small subunit methyltransferase H (Burkholderia orbicola (strain MC0-3)).